Here is a 138-residue protein sequence, read N- to C-terminus: Large ribosomal subunit protein uL16 (138 aa).

The protein belongs to the universal ribosomal protein uL16 family. Part of the 50S ribosomal subunit.

In terms of biological role, binds 23S rRNA and is also seen to make contacts with the A and possibly P site tRNAs. The chain is Large ribosomal subunit protein uL16 from Neisseria gonorrhoeae (strain ATCC 700825 / FA 1090).